We begin with the raw amino-acid sequence, 125 residues long: Glycine cleavage system H protein (125 aa).

Positions 19-101 constitute a Lipoyl-binding domain; the sequence is IATIGITDYA…MGDGWFIKLR (83 aa). Residue Lys-60 is modified to N6-lipoyllysine.

This sequence belongs to the GcvH family. The glycine cleavage system is composed of four proteins: P, T, L and H. It depends on (R)-lipoate as a cofactor.

Functionally, the glycine cleavage system catalyzes the degradation of glycine. The H protein shuttles the methylamine group of glycine from the P protein to the T protein. This is Glycine cleavage system H protein from Parvibaculum lavamentivorans (strain DS-1 / DSM 13023 / NCIMB 13966).